The primary structure comprises 355 residues: Peptide chain release factor 1 (355 aa).

Gln-232 is subject to N5-methylglutamine. The segment at 282–309 is disordered; the sequence is EQNASISAERKSQVGSGDRSERIRTYNY. Residues 289–305 show a composition bias toward basic and acidic residues; sequence AERKSQVGSGDRSERIR.

It belongs to the prokaryotic/mitochondrial release factor family. In terms of processing, methylated by PrmC. Methylation increases the termination efficiency of RF1.

Its subcellular location is the cytoplasm. Its function is as follows. Peptide chain release factor 1 directs the termination of translation in response to the peptide chain termination codons UAG and UAA. This Desulfatibacillum aliphaticivorans protein is Peptide chain release factor 1.